The chain runs to 89 residues: Aminoacyl carrier protein 2 (89 aa).

The Carrier domain maps to 6–84 (INVQNRVLSV…AMERMILNQL (79 aa)). S42 is subject to O-(pantetheine 4'-phosphoryl)serine.

Post-translationally, 4'-phosphopantetheine is transferred from CoA to a specific serine of the apo-form of this carrier protein.

Its function is as follows. Aminoacyl carrier protein. Can be charged with L-glycine via the formation of a thioester bond between the amino acid and the 4'-phosphopantetheinyl prosthetic group, catalyzed by the bll6282 ligase. This Bradyrhizobium diazoefficiens (strain JCM 10833 / BCRC 13528 / IAM 13628 / NBRC 14792 / USDA 110) protein is Aminoacyl carrier protein 2.